The following is a 392-amino-acid chain: Probable nucleoredoxin 3 (392 aa).

2 consecutive Thioredoxin domains span residues 17 to 171 and 177 to 326; these read LYSI…DSKR and EKLL…ELKA.

Belongs to the nucleoredoxin family.

The enzyme catalyses [protein]-dithiol + NAD(+) = [protein]-disulfide + NADH + H(+). It carries out the reaction [protein]-dithiol + NADP(+) = [protein]-disulfide + NADPH + H(+). Its function is as follows. Probable thiol-disulfide oxidoreductase that may participate in various redox reactions. The sequence is that of Probable nucleoredoxin 3 from Arabidopsis thaliana (Mouse-ear cress).